The chain runs to 1169 residues: Chromosome partition protein Smc (1169 aa).

Residue 32-39 (PNGCGKSN) participates in ATP binding. 2 coiled-coil regions span residues 170–265 (ISKY…TGEE) and 307–481 (IRHT…ERLN). An SMC hinge domain is found at 525–620 (DRLGEKIEVA…CASDPAEAAE (96 aa)). Coiled coils occupy residues 656 to 914 (ALAR…MKLA) and 985 to 1014 (RYLE…ECRA).

The protein belongs to the SMC family. Homodimer.

It is found in the cytoplasm. Functionally, required for chromosome condensation and partitioning. The sequence is that of Chromosome partition protein Smc from Methylococcus capsulatus (strain ATCC 33009 / NCIMB 11132 / Bath).